Here is a 264-residue protein sequence, read N- to C-terminus: Apolipoprotein A-I (264 aa).

An N-terminal signal peptide occupies residues 1-18 (MKAVLLVVAALFLAGSQA). 2 consecutive repeat copies span residues 67 to 88 (LRLS…ADFG) and 89 to 110 (LATQ…QIVS). Positions 67 to 264 (LRLSDNWDTL…DQASKQLAAQ (198 aa)) are 10 X approximate tandem repeats. The stretch at 111–121 (EDLQDVKHKVQ) is one 3; half-length repeat. A run of 5 repeats spans residues 122–143 (PYLE…EKVR), 144–165 (PLGI…EKLT), 166–187 (PLGE…TQLA), 188–207 (PFSE…LKDS), and 208–229 (ATLA…EKAK). Met193 is modified (methionine sulfoxide). A 9; half-length repeat occupies 230–240 (PALEDLRQGLL). The stretch at 241-264 (PVLENLKASILSSIDQASKQLAAQ) is repeat 10.

It belongs to the apolipoprotein A1/A4/E family. In terms of assembly, homodimer. Interacts with APOA1BP and CLU. Component of a sperm activating protein complex (SPAP), consisting of APOA1, an immunoglobulin heavy chain, an immunoglobulin light chain and albumin. Interacts with NDRG1. Interacts with SCGB3A2. Interacts with NAXE and YJEFN3. Post-translationally, glycosylated. In terms of processing, palmitoylated. Phosphorylation sites are present in the extracellular medium.

It is found in the secreted. Its function is as follows. Participates in the reverse transport of cholesterol from tissues to the liver for excretion by promoting cholesterol efflux from tissues and by acting as a cofactor for the lecithin cholesterol acyltransferase (LCAT). As part of the SPAP complex, activates spermatozoa motility. This chain is Apolipoprotein A-I (APOA1), found in Cavia porcellus (Guinea pig).